The chain runs to 469 residues: Glutamate--tRNA ligase 2 (469 aa).

The short motif at 8–18 (PSPTGFLHVGG) is the 'HIGH' region element. Positions 250-254 (KLSKR) match the 'KMSKS' region motif. Residue K253 coordinates ATP.

Belongs to the class-I aminoacyl-tRNA synthetase family. Glutamate--tRNA ligase type 1 subfamily. As to quaternary structure, monomer.

The protein resides in the cytoplasm. It catalyses the reaction tRNA(Glu) + L-glutamate + ATP = L-glutamyl-tRNA(Glu) + AMP + diphosphate. Its function is as follows. Catalyzes the attachment of glutamate to tRNA(Glu) in a two-step reaction: glutamate is first activated by ATP to form Glu-AMP and then transferred to the acceptor end of tRNA(Glu). This chain is Glutamate--tRNA ligase 2, found in Thermotoga sp. (strain RQ2).